A 520-amino-acid chain; its full sequence is Putative thymidine phosphorylase 1 (520 aa).

It belongs to the thymidine/pyrimidine-nucleoside phosphorylase family. Type 2 subfamily.

It carries out the reaction thymidine + phosphate = 2-deoxy-alpha-D-ribose 1-phosphate + thymine. In Cupriavidus necator (strain ATCC 17699 / DSM 428 / KCTC 22496 / NCIMB 10442 / H16 / Stanier 337) (Ralstonia eutropha), this protein is Putative thymidine phosphorylase 1.